A 612-amino-acid polypeptide reads, in one-letter code: Threonine--tRNA ligase (612 aa).

A catalytic region spans residues 218–509; that stretch reads DHRKLGVELG…LSEHFWGNFP (292 aa). The Zn(2+) site is built by Cys-310, His-361, and His-486.

This sequence belongs to the class-II aminoacyl-tRNA synthetase family. Homodimer. Zn(2+) is required as a cofactor.

It is found in the cytoplasm. The catalysed reaction is tRNA(Thr) + L-threonine + ATP = L-threonyl-tRNA(Thr) + AMP + diphosphate + H(+). In terms of biological role, catalyzes the attachment of threonine to tRNA(Thr) in a two-step reaction: L-threonine is first activated by ATP to form Thr-AMP and then transferred to the acceptor end of tRNA(Thr). Also edits incorrectly charged L-seryl-tRNA(Thr). This is Threonine--tRNA ligase from Helicobacter acinonychis (strain Sheeba).